The following is a 144-amino-acid chain: Protein WAP-3 (144 aa).

The N-terminal stretch at 1–21 (MRSRSFLVLVAVFLICETLVA) is a signal peptide. Residues 28–49 (RGPKGQGQDPVEGQDQDEGQGP) form a disordered region. G34 is a region of interest (8 X 6 AA approximate tandem repeats). A run of 8 repeats spans residues 34–39 (GQDPVE), 40–45 (GQDQDE), 46–51 (GQGPVK), 58–63 (GQDLVK), 64–69 (GQDPVE), 70–75 (GQDPVK), 76–81 (AQLPDK), and 82–87 (VQDPVK). The interval 64–85 (GQDPVEGQDPVKAQLPDKVQDP) is disordered. The 48-residue stretch at 97-144 (LFPKPGVCPKIIFCPLVNPPIKCWRDSHCPGVKKCCPSLCGKGCVTPR) folds into the WAP domain. 4 cysteine pairs are disulfide-bonded: C104–C132, C110–C136, C119–C131, and C125–C140.

As to expression, large intestine (relatively low levels).

The sequence is that of Protein WAP-3 from Sus scrofa (Pig).